The chain runs to 167 residues: Iron-sulfur cluster assembly enzyme ISCU (167 aa).

The transit peptide at 1-34 (MAAAGAFRLRRAASALLLRSPRLPARELSAPARL) directs the protein to the mitochondrion. S14 carries the post-translational modification Phosphoserine; by MTOR. P46 lines the Zn(2+) pocket. The Cysteine persulfide intermediate role is filled by C69. C69 is modified (cysteine persulfide). 5 residues coordinate Zn(2+): G70, D71, C95, K112, and C138. C138 acts as the Cysteine persulfide intermediate in catalysis. At C138 the chain carries Cysteine persulfide.

This sequence belongs to the NifU family. Homodimer; Tyr-35-mediated dimerization of two iron- and sulfide-containing ISCU subunit bind to the cysteine desulfurase complex. Component of the mitochondrial core iron-sulfur cluster (ISC) complex composed of NFS1, LYRM4, NDUFAB1, ISCU, FXN, and FDX2; this complex is an heterohexamer containing two copies of each monomer. Interacts (D-state) with NFS1 (homodimer form); each monomer interacts with the C-terminal regions of each NFS1 monomer. Interacts (monomer form) with FXN (via ferrous form); the interaction is possible when both are bound to the dimeric form of the cysteine desulfurase complex (NFS1:LYRM4) and enhances FXN interaction to the dimeric form of the cysteine desulfurase complex (NFS1:LYRM4). Interacts with GLRX5. Interacts (D-state) with HSPA9. Interacts (S-state) with HSCB; this interaction stimulates the ATPase activity of HSPA9. In terms of assembly, component of the cytoplasmic core iron-sulfur cluster (ISC) complex composed at least of NFS1, LYRM4, and ISCU; this complex interacts with FXN. Monomer; each monomer binds to the C-terminal regions of NFS1 (cytoplasmic and homodimer form). Interacts with NFS1 (cytoplasmic and homodimer form); this interaction promotes de novo iron-sulfur cluster formation. Interacts with HSCB (cytoplasmic form); this interaction stabilizes the (Fe-S) clusters on ISCU. In terms of processing, phosphorylation at Ser-14 is required for ISCU protein stabilization in the cytosol, whereas dephosphorylation of Ser-14, due to the inhibition of mTORC1 (mammalian target of rapamycin complex 1) complex, leads to degradation of the precursor form and ultimately to a decrease in the mitochondrial mature form. Post-translationally, cysteine persulfide is reduced by thiol-containing molecules such as glutathione and L-cysteine. Detected in heart, liver, skeletal muscle, brain, pancreas, kidney, lung and placenta.

It localises to the mitochondrion. Its subcellular location is the cytoplasm. It is found in the nucleus. Functionally, mitochondrial scaffold protein, of the core iron-sulfur cluster (ISC) assembly complex, that provides the structural architecture on which the [2Fe-2S] clusters are assembled. The core iron-sulfur cluster (ISC) assembly complex is involved in the de novo synthesis of a [2Fe-2S] cluster, the first step of the mitochondrial iron-sulfur protein biogenesis. This process is initiated by the cysteine desulfurase complex (NFS1:LYRM4:NDUFAB1) that produces persulfide which is delivered on the scaffold protein ISCU in a FXN-dependent manner. Then this complex is stabilized by FDX2 which provides reducing equivalents to accomplish the [2Fe-2S] cluster assembly. Finally, the [2Fe-2S] cluster is transferred from ISCU to chaperone proteins, including HSCB, HSPA9 and GLRX5. Exists as two slow interchanging conformational states, a structured (S) and disordered (D) form. May modulate NFS1 desulfurase activity in a zinc-dependent manner. Modulates the interaction between FXN and the cysteine desulfurase complex. In terms of biological role, cytoplasmic scaffold protein, of the cytoplasmic core iron-sulfur cluster (ISC) assembly complex that provides the structural architecture on which the Fe-S clusters are assembled and may be involved in the cytoplasmic iron-sulfur protein biogenesis. This Homo sapiens (Human) protein is Iron-sulfur cluster assembly enzyme ISCU.